The chain runs to 259 residues: Probable ABC transporter permease protein RT0041 (259 aa).

Helical transmembrane passes span V20–Y40, L49–V69, V148–M168, L195–I215, and A237–F257.

The protein belongs to the MlaE permease family.

Its subcellular location is the cell inner membrane. Could be part of an ABC transporter complex. The sequence is that of Probable ABC transporter permease protein RT0041 from Rickettsia typhi (strain ATCC VR-144 / Wilmington).